The chain runs to 132 residues: Small ribosomal subunit protein uS8 (132 aa).

It belongs to the universal ribosomal protein uS8 family. Part of the 30S ribosomal subunit. Contacts proteins S5 and S12.

Functionally, one of the primary rRNA binding proteins, it binds directly to 16S rRNA central domain where it helps coordinate assembly of the platform of the 30S subunit. The sequence is that of Small ribosomal subunit protein uS8 from Rhodococcus jostii (strain RHA1).